The chain runs to 360 residues: uncharacterized protein (360 aa).

The segment at 193–245 is disordered; the sequence is SRHTRPKGQPLSSPKKNSGSAARPSTAIGLCRRSQTPGALQSTGPSNTELEPE. 2 stretches are compositionally biased toward polar residues: residues 202-212 and 225-241; these read PLSSPKKNSGS and RSQT…SNTE.

This is an uncharacterized protein from Homo sapiens (Human).